The primary structure comprises 296 residues: 4-hydroxybenzoate octaprenyltransferase (296 aa).

Transmembrane regions (helical) follow at residues 29–49 (IGIYLLLWPTLWSLWIAADGV), 55–75 (LLIFVLGVILMRAAGCVINDF), 102–122 (AWITFAVLVALSFGLVLLTNA), 146–166 (YYPQVVLGAAYSWGILMAFTA), 169–189 (GELPASAWLLFLANVLWTVAY), 219–239 (LIIGSLQGLTLLLLALAGSRF), 241–261 (LGLYFYLGLAVAAACFVWEAW), and 275–295 (FLHNHWAGLAIFLGTVADYAL).

This sequence belongs to the UbiA prenyltransferase family. Mg(2+) serves as cofactor.

The protein localises to the cell inner membrane. The catalysed reaction is all-trans-octaprenyl diphosphate + 4-hydroxybenzoate = 4-hydroxy-3-(all-trans-octaprenyl)benzoate + diphosphate. Its pathway is cofactor biosynthesis; ubiquinone biosynthesis. Catalyzes the prenylation of para-hydroxybenzoate (PHB) with an all-trans polyprenyl group. Mediates the second step in the final reaction sequence of ubiquinone-8 (UQ-8) biosynthesis, which is the condensation of the polyisoprenoid side chain with PHB, generating the first membrane-bound Q intermediate 3-octaprenyl-4-hydroxybenzoate. The sequence is that of 4-hydroxybenzoate octaprenyltransferase from Pseudomonas aeruginosa (strain UCBPP-PA14).